We begin with the raw amino-acid sequence, 880 residues long: Valine--tRNA ligase (880 aa).

A 'HIGH' region motif is present at residues Pro49 to His59. Positions Lys525–Ser529 match the 'KMSKS' region motif. Lys528 serves as a coordination point for ATP. The stretch at Leu809–Asn880 forms a coiled coil.

The protein belongs to the class-I aminoacyl-tRNA synthetase family. ValS type 1 subfamily. In terms of assembly, monomer.

The protein localises to the cytoplasm. The catalysed reaction is tRNA(Val) + L-valine + ATP = L-valyl-tRNA(Val) + AMP + diphosphate. Catalyzes the attachment of valine to tRNA(Val). As ValRS can inadvertently accommodate and process structurally similar amino acids such as threonine, to avoid such errors, it has a 'posttransfer' editing activity that hydrolyzes mischarged Thr-tRNA(Val) in a tRNA-dependent manner. The sequence is that of Valine--tRNA ligase from Bacillus licheniformis (strain ATCC 14580 / DSM 13 / JCM 2505 / CCUG 7422 / NBRC 12200 / NCIMB 9375 / NCTC 10341 / NRRL NRS-1264 / Gibson 46).